The following is a 121-amino-acid chain: Large ribosomal subunit protein uL14c (121 aa).

This sequence belongs to the universal ribosomal protein uL14 family. Part of the 50S ribosomal subunit.

Its subcellular location is the plastid. The protein resides in the chloroplast. Functionally, binds to 23S rRNA. The chain is Large ribosomal subunit protein uL14c from Oedogonium cardiacum (Filamentous green alga).